A 243-amino-acid polypeptide reads, in one-letter code: UPF0502 protein H16_B1091 (243 aa).

Residues 1 to 23 are disordered; it reads MQSNHDSDASQAGDRPARPALRP.

The protein belongs to the UPF0502 family.

This Cupriavidus necator (strain ATCC 17699 / DSM 428 / KCTC 22496 / NCIMB 10442 / H16 / Stanier 337) (Ralstonia eutropha) protein is UPF0502 protein H16_B1091.